The primary structure comprises 227 residues: Phosphoribosylformylglycinamidine synthase subunit PurQ (227 aa).

Positions 3-225 (FAVIVLPGSN…VKNWRETHVA (223 aa)) constitute a Glutamine amidotransferase type-1 domain. The active-site Nucleophile is C86. Residues H194 and E196 contribute to the active site.

As to quaternary structure, part of the FGAM synthase complex composed of 1 PurL, 1 PurQ and 2 PurS subunits.

Its subcellular location is the cytoplasm. The enzyme catalyses N(2)-formyl-N(1)-(5-phospho-beta-D-ribosyl)glycinamide + L-glutamine + ATP + H2O = 2-formamido-N(1)-(5-O-phospho-beta-D-ribosyl)acetamidine + L-glutamate + ADP + phosphate + H(+). It catalyses the reaction L-glutamine + H2O = L-glutamate + NH4(+). The protein operates within purine metabolism; IMP biosynthesis via de novo pathway; 5-amino-1-(5-phospho-D-ribosyl)imidazole from N(2)-formyl-N(1)-(5-phospho-D-ribosyl)glycinamide: step 1/2. Part of the phosphoribosylformylglycinamidine synthase complex involved in the purines biosynthetic pathway. Catalyzes the ATP-dependent conversion of formylglycinamide ribonucleotide (FGAR) and glutamine to yield formylglycinamidine ribonucleotide (FGAM) and glutamate. The FGAM synthase complex is composed of three subunits. PurQ produces an ammonia molecule by converting glutamine to glutamate. PurL transfers the ammonia molecule to FGAR to form FGAM in an ATP-dependent manner. PurS interacts with PurQ and PurL and is thought to assist in the transfer of the ammonia molecule from PurQ to PurL. This chain is Phosphoribosylformylglycinamidine synthase subunit PurQ, found in Bacillus licheniformis (strain ATCC 14580 / DSM 13 / JCM 2505 / CCUG 7422 / NBRC 12200 / NCIMB 9375 / NCTC 10341 / NRRL NRS-1264 / Gibson 46).